Here is a 94-residue protein sequence, read N- to C-terminus: Integration host factor subunit beta (94 aa).

This sequence belongs to the bacterial histone-like protein family. In terms of assembly, heterodimer of an alpha and a beta chain.

This protein is one of the two subunits of integration host factor, a specific DNA-binding protein that functions in genetic recombination as well as in transcriptional and translational control. The chain is Integration host factor subunit beta from Azorhizobium caulinodans (strain ATCC 43989 / DSM 5975 / JCM 20966 / LMG 6465 / NBRC 14845 / NCIMB 13405 / ORS 571).